Reading from the N-terminus, the 178-residue chain is Translation initiation factor IF-3 (178 aa).

A disordered region spans residues 1 to 20 (MRRPFRATPVQKDGPRSNRD).

This sequence belongs to the IF-3 family. As to quaternary structure, monomer.

It localises to the cytoplasm. In terms of biological role, IF-3 binds to the 30S ribosomal subunit and shifts the equilibrium between 70S ribosomes and their 50S and 30S subunits in favor of the free subunits, thus enhancing the availability of 30S subunits on which protein synthesis initiation begins. In Brucella abortus biovar 1 (strain 9-941), this protein is Translation initiation factor IF-3.